The chain runs to 461 residues: ATP synthase subunit beta (461 aa).

151 to 158 contributes to the ATP binding site; sequence GGAGVGKT.

It belongs to the ATPase alpha/beta chains family. In terms of assembly, F-type ATPases have 2 components, CF(1) - the catalytic core - and CF(0) - the membrane proton channel. CF(1) has five subunits: alpha(3), beta(3), gamma(1), delta(1), epsilon(1). CF(0) has three main subunits: a(1), b(2) and c(9-12). The alpha and beta chains form an alternating ring which encloses part of the gamma chain. CF(1) is attached to CF(0) by a central stalk formed by the gamma and epsilon chains, while a peripheral stalk is formed by the delta and b chains.

The protein localises to the cell inner membrane. It catalyses the reaction ATP + H2O + 4 H(+)(in) = ADP + phosphate + 5 H(+)(out). Its function is as follows. Produces ATP from ADP in the presence of a proton gradient across the membrane. The catalytic sites are hosted primarily by the beta subunits. This Colwellia psychrerythraea (strain 34H / ATCC BAA-681) (Vibrio psychroerythus) protein is ATP synthase subunit beta.